Reading from the N-terminus, the 109-residue chain is Homeobox protein E60 (109 aa).

The tract at residues 1 to 31 (PRTRRVKRSDGRGNGGTPEEKRPRTAFSGEQ) is disordered. The homeobox DNA-binding region spans 20–79 (EKRPRTAFSGEQLARLKREFAENRYLTERRRQQLSRDLGLNEAQIKIWFQNKRAKIKKAS).

It belongs to the engrailed homeobox family.

Its subcellular location is the nucleus. The protein is Homeobox protein E60 of Apis mellifera (Honeybee).